A 565-amino-acid polypeptide reads, in one-letter code: Adenine deaminase (565 aa).

It belongs to the metallo-dependent hydrolases superfamily. Adenine deaminase family. Requires Mn(2+) as cofactor.

The catalysed reaction is adenine + H2O + H(+) = hypoxanthine + NH4(+). The protein is Adenine deaminase of Cereibacter sphaeroides (strain ATCC 17025 / ATH 2.4.3) (Rhodobacter sphaeroides).